Reading from the N-terminus, the 388-residue chain is Chorismate synthase (388 aa).

Residues Arg-39 and Arg-45 each contribute to the NADP(+) site. FMN contacts are provided by residues Arg-130 to Ser-132, Asn-251 to Ala-252, Gly-296, Lys-311 to Thr-315, and Arg-337.

The protein belongs to the chorismate synthase family. In terms of assembly, homotetramer. It depends on FMNH2 as a cofactor.

It catalyses the reaction 5-O-(1-carboxyvinyl)-3-phosphoshikimate = chorismate + phosphate. Its pathway is metabolic intermediate biosynthesis; chorismate biosynthesis; chorismate from D-erythrose 4-phosphate and phosphoenolpyruvate: step 7/7. In terms of biological role, catalyzes the anti-1,4-elimination of the C-3 phosphate and the C-6 proR hydrogen from 5-enolpyruvylshikimate-3-phosphate (EPSP) to yield chorismate, which is the branch point compound that serves as the starting substrate for the three terminal pathways of aromatic amino acid biosynthesis. This reaction introduces a second double bond into the aromatic ring system. This is Chorismate synthase from Lactococcus lactis subsp. lactis (strain IL1403) (Streptococcus lactis).